A 235-amino-acid polypeptide reads, in one-letter code: Cytochrome c-554 (235 aa).

An N-terminal signal peptide occupies residues 1-24 (MKIMIACGLVAAALFTLTSGQSLA). 15 residues coordinate heme: cysteine 35, cysteine 38, histidine 39, histidine 51, cysteine 84, cysteine 87, histidine 88, cysteine 112, cysteine 115, histidine 116, histidine 126, cysteine 158, cysteine 161, histidine 162, and histidine 203. The segment at 121–144 (NFRGDHRKSGQAFEKSGKKTPRKD) is disordered.

Binds 4 heme groups per subunit.

It localises to the periplasm. Involved in ammonia oxidation; accepts electrons directly from hydroxylamine oxidoreductase (HAO). The polypeptide is Cytochrome c-554 (cycA1) (Nitrosomonas europaea (strain ATCC 19718 / CIP 103999 / KCTC 2705 / NBRC 14298)).